The sequence spans 143 residues: Flagellar assembly factor FliW (143 aa).

Belongs to the FliW family. In terms of assembly, interacts with translational regulator CsrA and flagellin(s).

It is found in the cytoplasm. Acts as an anti-CsrA protein, binds CsrA and prevents it from repressing translation of its target genes, one of which is flagellin. Binds to flagellin and participates in the assembly of the flagellum. The chain is Flagellar assembly factor FliW from Bacillus velezensis (strain DSM 23117 / BGSC 10A6 / LMG 26770 / FZB42) (Bacillus amyloliquefaciens subsp. plantarum).